Consider the following 581-residue polypeptide: Protein ORF B (581 aa).

In Elephas maximus (Indian elephant), this protein is Protein ORF B.